Consider the following 240-residue polypeptide: Protein unc-119 homolog A (240 aa).

A compositionally biased stretch (gly residues) spans 1–12; the sequence is MKVKKGGGGTGS. Residues 1–62 are disordered; sequence MKVKKGGGGT…PLQGKQPIGP (62 aa). Phosphoserine; by CK2 is present on residues Ser37, Ser39, and Ser41. Tyr131 contributes to the tetradecanoate binding site.

This sequence belongs to the PDE6D/unc-119 family. In terms of assembly, may interact with GTP-bound ARL1. Interacts with ARL2 and ARL3 (GTP-bound forms); this promotes the release of myristoylated cargo proteins. Found in a complex with ARL3, RP2 and UNC119; RP2 induces hydrolysis of GTP ARL3 in the complex, leading to the release of UNC119. Interacts with NPHP3 (when myristoylated). Interacts with CYS1 (when myristoylated). Interacts with MACIR; interaction only takes place when UNC119 is not liganded with myristoylated proteins. Interacts with CABP4; in the absence of calcium. Interacts with DNM1; leading to a decrease of DNM1 GTPase activity. Interacts with LCK; this interaction plays a crucial role in activation of LCK. Interacts with FYN. Interacts with RAB11A; in a cell cycle-dependent manner. Interacts with LYN (via SH2 and SH3 domains); leading to LYN activation. Found in a complex with ABL1, ABL2, CRK and UNC119; leading to the inhibition of CRK phosphorylation by ABL kinases. Interacts with CD44. Interacts with KLHL18 (via kelch repeats). Interacts with PPP3CA, PPP3CB and PPP3CC. Interacts with USP48; this interaction promotes UNC119 stability. In terms of processing, phosphorylation suppresses its interaction with KLHL18 and down-regulates its KLHL18-mediated degradation. Phosphorylated more under light conditions than dark conditions. Dephosphorylated by calcineurin. Localized in photoreceptor synapses in the outer plexiform layer of the retina.

Its subcellular location is the cytoplasm. It is found in the cytoskeleton. The protein resides in the microtubule organizing center. It localises to the centrosome. The protein localises to the spindle. Its subcellular location is the spindle pole. In terms of biological role, involved in synaptic functions in photoreceptor cells, the signal transduction in immune cells as a Src family kinase activator, endosome recycling, the uptake of bacteria and endocytosis, protein trafficking in sensory neurons and as lipid-binding chaperone with specificity for a diverse subset of myristoylated proteins. Specifically binds the myristoyl moiety of a subset of N-terminally myristoylated proteins and is required for their localization. Binds myristoylated GNAT1 and is required for G-protein localization and trafficking in sensory neurons. Probably plays a role in trafficking proteins in photoreceptor cells. Plays important roles in mediating Src family kinase signals for the completion of cytokinesis via RAB11A. The sequence is that of Protein unc-119 homolog A (Unc119) from Mus musculus (Mouse).